We begin with the raw amino-acid sequence, 159 residues long: Ribosomal RNA large subunit methyltransferase H (159 aa).

Residues Leu76, Gly108, and 127–132 (FSRMTF) each bind S-adenosyl-L-methionine.

It belongs to the RNA methyltransferase RlmH family. As to quaternary structure, homodimer.

It is found in the cytoplasm. The enzyme catalyses pseudouridine(1915) in 23S rRNA + S-adenosyl-L-methionine = N(3)-methylpseudouridine(1915) in 23S rRNA + S-adenosyl-L-homocysteine + H(+). In terms of biological role, specifically methylates the pseudouridine at position 1915 (m3Psi1915) in 23S rRNA. The polypeptide is Ribosomal RNA large subunit methyltransferase H (Bacillus pumilus (strain SAFR-032)).